Consider the following 172-residue polypeptide: Large ribosomal subunit protein uL16 (172 aa).

It belongs to the universal ribosomal protein uL16 family.

This is Large ribosomal subunit protein uL16 from Methanocella arvoryzae (strain DSM 22066 / NBRC 105507 / MRE50).